The primary structure comprises 502 residues: Probable malate:quinone oxidoreductase (502 aa).

It belongs to the MQO family. The cofactor is FAD.

The catalysed reaction is (S)-malate + a quinone = a quinol + oxaloacetate. Its pathway is carbohydrate metabolism; tricarboxylic acid cycle; oxaloacetate from (S)-malate (quinone route): step 1/1. The polypeptide is Probable malate:quinone oxidoreductase (Synechococcus sp. (strain CC9605)).